We begin with the raw amino-acid sequence, 544 residues long: Tyrosyl-DNA phosphodiesterase 1 (544 aa).

The Nucleophile role is filled by histidine 182. A substrate-binding site is contributed by lysine 184. The tract at residues 312-316 is interaction with DNA; it reads SIGTS. The Proton donor/acceptor role is filled by histidine 432. Position 434 (lysine 434) interacts with substrate.

The protein belongs to the tyrosyl-DNA phosphodiesterase family.

The protein localises to the nucleus. Functionally, DNA repair enzyme that can remove a variety of covalent adducts from DNA through hydrolysis of a 3'-phosphodiester bond, giving rise to DNA with a free 3' phosphate. Catalyzes the hydrolysis of dead-end complexes between DNA and the topoisomerase I active site tyrosine residue. Hydrolyzes 3'-phosphoglycolates on protruding 3' ends on DNA double-strand breaks due to DNA damage by radiation and free radicals. Also cleaves 5' phosphotyrosyl adducts resulting from dead-end complexes between DNA and the active site tyrosine of topoisomerase II. Contributes to DNA repair after radiation damage. Acts on blunt-ended double-strand DNA breaks and on single-stranded DNA. May have low 3'exonuclease activity and may be able to remove a single nucleoside from the 3'end of DNA and RNA molecules with 3'hydroxyl groups. Has no exonuclease activity towards DNA or RNA with a 3'phosphate. This Saccharomyces cerevisiae (strain ATCC 204508 / S288c) (Baker's yeast) protein is Tyrosyl-DNA phosphodiesterase 1 (TDP1).